The following is a 429-amino-acid chain: Phenylalanine--tRNA ligase, chloroplastic/mitochondrial (429 aa).

Residues 1–53 (MTVFSVQSTIFSRASVALLSSNGFKRFSFVSSFSSSAAYSPPKMRKRRYPIVS) constitute a chloroplast and mitochondrion transit peptide. A54 is modified (N-acetylalanine). Substrate contacts are provided by residues 163–166 (SAHQ), R185, 192–194 (THY), 199–201 (QME), E269, and F294. The region spanning 338 to 429 (SKYPPCYKDI…VQKKLNVELR (92 aa)) is the FDX-ACB domain.

This sequence belongs to the class-II aminoacyl-tRNA synthetase family. In terms of assembly, monomer.

The protein localises to the plastid. The protein resides in the chloroplast stroma. It is found in the mitochondrion matrix. The enzyme catalyses tRNA(Phe) + L-phenylalanine + ATP = L-phenylalanyl-tRNA(Phe) + AMP + diphosphate + H(+). Functionally, is responsible for the charging of tRNA(Phe) with phenylalanine in mitochondrial translation. The chain is Phenylalanine--tRNA ligase, chloroplastic/mitochondrial from Arabidopsis thaliana (Mouse-ear cress).